Consider the following 209-residue polypeptide: Uracil phosphoribosyltransferase (209 aa).

Residues Arg-79, Arg-104, and 131 to 139 contribute to the 5-phospho-alpha-D-ribose 1-diphosphate site; that span reads DPMLATGNS. Uracil is bound by residues Ile-194 and 199 to 201; that span reads GDA. Asp-200 contributes to the 5-phospho-alpha-D-ribose 1-diphosphate binding site.

Belongs to the UPRTase family. The cofactor is Mg(2+).

The enzyme catalyses UMP + diphosphate = 5-phospho-alpha-D-ribose 1-diphosphate + uracil. It participates in pyrimidine metabolism; UMP biosynthesis via salvage pathway; UMP from uracil: step 1/1. Allosterically activated by GTP. In terms of biological role, catalyzes the conversion of uracil and 5-phospho-alpha-D-ribose 1-diphosphate (PRPP) to UMP and diphosphate. The sequence is that of Uracil phosphoribosyltransferase from Rhodococcus jostii (strain RHA1).